The following is a 991-amino-acid chain: Regulator of telomere elongation helicase 1 homolog (991 aa).

Positions 7 to 319 (NGIPVNFPFE…DDLVLLKEIL (313 aa)) constitute a Helicase ATP-binding domain. 42 to 49 (SPTGTGKT) is an ATP binding site. Residues cysteine 148, cysteine 166, cysteine 175, and cysteine 211 each coordinate [4Fe-4S] cluster. Positions 254–257 (DEAH) match the DEAH box motif. Positions 812–833 (SMKVNPHSRSTKSAGDDAEAGG) are disordered.

The protein belongs to the helicase family. RAD3/XPD subfamily.

The protein localises to the nucleus. The enzyme catalyses ATP + H2O = ADP + phosphate + H(+). Its function is as follows. A probable ATP-dependent DNA helicase implicated in DNA repair and the maintenance of genomic stability. Acts as an anti-recombinase to counteract toxic recombination and limit crossover during meiosis. Regulates meiotic recombination and crossover homeostasis by physically dissociating strand invasion events and thereby promotes noncrossover repair by meiotic synthesis dependent strand annealing (SDSA) as well as disassembly of D loop recombination intermediates. In Anopheles gambiae (African malaria mosquito), this protein is Regulator of telomere elongation helicase 1 homolog.